A 236-amino-acid chain; its full sequence is Rho-related GTP-binding protein RhoV (236 aa).

Positions 1-27 (MPPRELSEAEPPPLRAPTPPPRRRSAP) are disordered. A compositionally biased stretch (pro residues) spans 10-20 (EPPPLRAPTPP). Ser25 carries the phosphoserine modification. GTP is bound by residues 38-45 (GDGAVGKS), 85-89 (DTAGQ), and 143-146 (TQAD). Cys234 carries the S-palmitoyl cysteine lipid modification.

The protein belongs to the small GTPase superfamily. Rho family. In terms of assembly, interacts with PAK2. Requires Mg(2+) as cofactor. Highly expressed in pancreas, placenta, and fetal brain.

The protein resides in the cell membrane. The protein localises to the endosome membrane. Functionally, plays a role in the control of the actin cytoskeleton via activation of the JNK pathway. The sequence is that of Rho-related GTP-binding protein RhoV from Homo sapiens (Human).